The chain runs to 338 residues: Cytochrome c biogenesis protein CcsA (338 aa).

8 consecutive transmembrane segments (helical) span residues 11 to 31, 39 to 59, 76 to 96, 100 to 120, 145 to 165, 244 to 264, 278 to 295, and 305 to 325; these read VLLD…YWLA, LLHE…TGLL, ESLF…EAFA, LVGV…SLTL, VMIL…AFLI, LIGL…VWAN, TWSL…HARI, and ATLA…VNFL.

Belongs to the CcmF/CycK/Ccl1/NrfE/CcsA family. May interact with ccs1.

Its subcellular location is the cell inner membrane. Required during biogenesis of c-type cytochromes (cytochrome c6 and cytochrome f) at the step of heme attachment. This Gloeobacter violaceus (strain ATCC 29082 / PCC 7421) protein is Cytochrome c biogenesis protein CcsA.